Here is a 25-residue protein sequence, read N- to C-terminus: Pregnancy-associated glycoprotein 72 (25 aa).

N-linked (GlcNAc...) asparagine glycans are attached at residues Asn4 and Asn21.

The protein belongs to the peptidase A1 family. In terms of processing, N-glycosylated. In terms of tissue distribution, expressed in chorionic epithelium (trophectoderm).

Its subcellular location is the secreted. The protein resides in the extracellular space. The protein is Pregnancy-associated glycoprotein 72 of Bison bison (American bison).